The primary structure comprises 619 residues: Sorting nexin-41 (619 aa).

Residues 1–95 (MWNDEDNNPY…ELVPRRKPGG (95 aa)) are disordered. The PX domain maps to 108 to 224 (PELPILITEA…WRFLDPNSSW (117 aa)). 4 residues coordinate a 1,2-diacyl-sn-glycero-3-phospho-(1D-myo-inositol-3-phosphate): Arg-142, Ser-144, Lys-168, and Arg-191. A disordered region spans residues 444–510 (YLSSSQQIQP…GSPSHKKAAS (67 aa)). Positions 454–467 (PRREPPAQHRRDGS) are enriched in basic and acidic residues.

Belongs to the sorting nexin family.

The protein localises to the endosome membrane. The protein resides in the endomembrane system. May be required for cytoplasm to vacuole transport (Cvt) and pexophagy. This chain is Sorting nexin-41 (vsp-6), found in Neurospora crassa (strain ATCC 24698 / 74-OR23-1A / CBS 708.71 / DSM 1257 / FGSC 987).